The following is a 64-amino-acid chain: Cytochrome c oxidase subunit 2 (64 aa).

Over M1–S14 the chain is Mitochondrial intermembrane. The chain crosses the membrane as a helical span at residues P15–M45. The Mitochondrial matrix portion of the chain corresponds to V46–V64.

This sequence belongs to the cytochrome c oxidase subunit 2 family. Component of the cytochrome c oxidase (complex IV, CIV), a multisubunit enzyme composed of 14 subunits. The complex is composed of a catalytic core of 3 subunits MT-CO1, MT-CO2 and MT-CO3, encoded in the mitochondrial DNA, and 11 supernumerary subunits COX4I, COX5A, COX5B, COX6A, COX6B, COX6C, COX7A, COX7B, COX7C, COX8 and NDUFA4, which are encoded in the nuclear genome. The complex exists as a monomer or a dimer and forms supercomplexes (SCs) in the inner mitochondrial membrane with NADH-ubiquinone oxidoreductase (complex I, CI) and ubiquinol-cytochrome c oxidoreductase (cytochrome b-c1 complex, complex III, CIII), resulting in different assemblies (supercomplex SCI(1)III(2)IV(1) and megacomplex MCI(2)III(2)IV(2)). Found in a complex with TMEM177, COA6, COX18, COX20, SCO1 and SCO2. Interacts with TMEM177 in a COX20-dependent manner. Interacts with COX20. Interacts with COX16. The cofactor is Cu cation.

The protein localises to the mitochondrion inner membrane. It catalyses the reaction 4 Fe(II)-[cytochrome c] + O2 + 8 H(+)(in) = 4 Fe(III)-[cytochrome c] + 2 H2O + 4 H(+)(out). Functionally, component of the cytochrome c oxidase, the last enzyme in the mitochondrial electron transport chain which drives oxidative phosphorylation. The respiratory chain contains 3 multisubunit complexes succinate dehydrogenase (complex II, CII), ubiquinol-cytochrome c oxidoreductase (cytochrome b-c1 complex, complex III, CIII) and cytochrome c oxidase (complex IV, CIV), that cooperate to transfer electrons derived from NADH and succinate to molecular oxygen, creating an electrochemical gradient over the inner membrane that drives transmembrane transport and the ATP synthase. Cytochrome c oxidase is the component of the respiratory chain that catalyzes the reduction of oxygen to water. Electrons originating from reduced cytochrome c in the intermembrane space (IMS) are transferred via the dinuclear copper A center (CU(A)) of subunit 2 and heme A of subunit 1 to the active site in subunit 1, a binuclear center (BNC) formed by heme A3 and copper B (CU(B)). The BNC reduces molecular oxygen to 2 water molecules using 4 electrons from cytochrome c in the IMS and 4 protons from the mitochondrial matrix. The chain is Cytochrome c oxidase subunit 2 (mt-co2) from Scaphirhynchus platorynchus (Shovelnose sturgeon).